The primary structure comprises 496 residues: Aspartyl/glutamyl-tRNA(Asn/Gln) amidotransferase subunit B (496 aa).

It belongs to the GatB/GatE family. GatB subfamily. In terms of assembly, heterotrimer of A, B and C subunits.

It carries out the reaction L-glutamyl-tRNA(Gln) + L-glutamine + ATP + H2O = L-glutaminyl-tRNA(Gln) + L-glutamate + ADP + phosphate + H(+). The enzyme catalyses L-aspartyl-tRNA(Asn) + L-glutamine + ATP + H2O = L-asparaginyl-tRNA(Asn) + L-glutamate + ADP + phosphate + 2 H(+). In terms of biological role, allows the formation of correctly charged Asn-tRNA(Asn) or Gln-tRNA(Gln) through the transamidation of misacylated Asp-tRNA(Asn) or Glu-tRNA(Gln) in organisms which lack either or both of asparaginyl-tRNA or glutaminyl-tRNA synthetases. The reaction takes place in the presence of glutamine and ATP through an activated phospho-Asp-tRNA(Asn) or phospho-Glu-tRNA(Gln). This Picosynechococcus sp. (strain ATCC 27264 / PCC 7002 / PR-6) (Agmenellum quadruplicatum) protein is Aspartyl/glutamyl-tRNA(Asn/Gln) amidotransferase subunit B.